A 750-amino-acid chain; its full sequence is Pesticidal crystal protein Cry11Bb (750 aa).

Positions 672–750 (QGYNDNYNQN…NYNQNTSSGV (79 aa)) are disordered.

This sequence belongs to the delta endotoxin family.

Promotes colloidosmotic lysis by binding to the midgut epithelial cells of mosquito larvae such as Aedes aegypti, Anopheles albimanus and Culex quinquefasciatus. This chain is Pesticidal crystal protein Cry11Bb (cry11Bb), found in Bacillus thuringiensis subsp. medellin.